Here is a 429-residue protein sequence, read N- to C-terminus: Transcriptional coactivator AacuS (429 aa).

One can recognise an HTH iclR-type domain in the interval 80–144 (MASQTQLLAC…GFLQEPELGH (65 aa)). The H-T-H motif DNA-binding region spans 110-129 (IKDVAELIGVPENHICRIVR).

It localises to the nucleus. Transcriptional coactivator; part of the gene cluster that mediates the biosynthesis of the tetrahydroxanthone dimer secalonic acid D. This Aspergillus aculeatus (strain ATCC 16872 / CBS 172.66 / WB 5094) protein is Transcriptional coactivator AacuS.